Consider the following 446-residue polypeptide: Rhamnogalacturonase A (446 aa).

A signal peptide spans 1 to 18; the sequence is MPALPILALALAPLLVNG. Cysteine 39 and cysteine 65 form a disulfide bridge. N-linked (GlcNAc...) asparagine glycans are attached at residues asparagine 50, asparagine 115, and asparagine 124. The active-site Proton donor is the aspartate 216. Cysteine 218 and cysteine 235 are oxidised to a cystine. Residues asparagine 236, asparagine 281, and asparagine 318 are each glycosylated (N-linked (GlcNAc...) asparagine). Intrachain disulfides connect cysteine 341/cysteine 347 and cysteine 369/cysteine 378.

Belongs to the glycosyl hydrolase 28 family.

It localises to the secreted. The enzyme catalyses Endohydrolysis of alpha-D-GalA-(1-&gt;2)-alpha-L-Rha glycosidic bond in the rhamnogalacturonan I backbone with initial inversion of anomeric configuration releasing oligosaccharides with beta-D-GalA at the reducing end.. Pectinolytic enzymes consist of four classes of enzymes: pectine lyase, polygalacturonase, pectin methylesterase and rhamnogalacturonase. Hydrolyzes alpha-D-galacturonopyranosyl-(1,2)-alpha-L-rhamnopyranosyl linkages in the backbone of the hairy regions of pectins. The polypeptide is Rhamnogalacturonase A (rhgA) (Aspergillus niger).